The sequence spans 443 residues: Ribosomal protein uS12 methylthiotransferase RimO (443 aa).

One can recognise an MTTase N-terminal domain in the interval 10 to 120 (PRVGFVSLGC…VMQAVHRHLP (111 aa)). Positions 19, 55, 84, 151, 155, and 158 each coordinate [4Fe-4S] cluster. The region spanning 137 to 375 (LTPQHYAYLK…DFQEDISTQR (239 aa)) is the Radical SAM core domain. The region spanning 377–443 (EAKIGREMTV…IHDLYAERVV (67 aa)) is the TRAM domain.

Belongs to the methylthiotransferase family. RimO subfamily. It depends on [4Fe-4S] cluster as a cofactor.

Its subcellular location is the cytoplasm. The enzyme catalyses L-aspartate(89)-[ribosomal protein uS12]-hydrogen + (sulfur carrier)-SH + AH2 + 2 S-adenosyl-L-methionine = 3-methylsulfanyl-L-aspartate(89)-[ribosomal protein uS12]-hydrogen + (sulfur carrier)-H + 5'-deoxyadenosine + L-methionine + A + S-adenosyl-L-homocysteine + 2 H(+). Functionally, catalyzes the methylthiolation of an aspartic acid residue of ribosomal protein uS12. This Azoarcus sp. (strain BH72) protein is Ribosomal protein uS12 methylthiotransferase RimO.